We begin with the raw amino-acid sequence, 429 residues long: Glutamate-1-semialdehyde 2,1-aminomutase 2 (429 aa).

Residue Lys268 is modified to N6-(pyridoxal phosphate)lysine.

It belongs to the class-III pyridoxal-phosphate-dependent aminotransferase family. HemL subfamily. Homodimer. Pyridoxal 5'-phosphate serves as cofactor.

The protein resides in the cytoplasm. The enzyme catalyses (S)-4-amino-5-oxopentanoate = 5-aminolevulinate. It functions in the pathway porphyrin-containing compound metabolism; protoporphyrin-IX biosynthesis; 5-aminolevulinate from L-glutamyl-tRNA(Glu): step 2/2. The sequence is that of Glutamate-1-semialdehyde 2,1-aminomutase 2 from Staphylococcus carnosus (strain TM300).